We begin with the raw amino-acid sequence, 325 residues long: Phospholipid phosphatase-related protein type 1 (325 aa).

An N-linked (GlcNAc...) asparagine glycan is attached at Asn-5. The next 3 membrane-spanning stretches (helical) occupy residues 13–33 (IIPC…LLAY), 67–87 (FISP…IIFI), and 127–147 (FIGV…AGQV). Asn-163 carries N-linked (GlcNAc...) asparagine glycosylation. The next 3 helical transmembrane spans lie at 201 to 218 (AALS…ITST), 230 to 247 (VLCL…LNRV), and 257 to 277 (VIAG…CVVH). A Phosphoserine modification is found at Ser-307. Asn-316 carries an N-linked (GlcNAc...) asparagine glycan.

The protein belongs to the PA-phosphatase related phosphoesterase family.

It is found in the cell membrane. It localises to the cell projection. Its subcellular location is the neuron projection. Functionally, may play a role in neurite outgrowth and neurogenesis. The protein is Phospholipid phosphatase-related protein type 1 of Mus musculus (Mouse).